The chain runs to 286 residues: Ribosomal RNA small subunit methyltransferase I (286 aa).

The protein belongs to the methyltransferase superfamily. RsmI family.

Its subcellular location is the cytoplasm. It carries out the reaction cytidine(1402) in 16S rRNA + S-adenosyl-L-methionine = 2'-O-methylcytidine(1402) in 16S rRNA + S-adenosyl-L-homocysteine + H(+). Catalyzes the 2'-O-methylation of the ribose of cytidine 1402 (C1402) in 16S rRNA. In Escherichia coli O157:H7, this protein is Ribosomal RNA small subunit methyltransferase I.